The chain runs to 295 residues: Pyridoxal 5'-phosphate synthase subunit PdxS (295 aa).

Aspartate 25 contributes to the D-ribose 5-phosphate binding site. The active-site Schiff-base intermediate with D-ribose 5-phosphate is the lysine 82. Glycine 154 is a D-ribose 5-phosphate binding site. Arginine 166 is a D-glyceraldehyde 3-phosphate binding site. D-ribose 5-phosphate is bound by residues glycine 215 and 236-237; that span reads GS.

Belongs to the PdxS/SNZ family. In the presence of PdxT, forms a dodecamer of heterodimers.

It carries out the reaction aldehydo-D-ribose 5-phosphate + D-glyceraldehyde 3-phosphate + L-glutamine = pyridoxal 5'-phosphate + L-glutamate + phosphate + 3 H2O + H(+). It functions in the pathway cofactor biosynthesis; pyridoxal 5'-phosphate biosynthesis. In terms of biological role, catalyzes the formation of pyridoxal 5'-phosphate from ribose 5-phosphate (RBP), glyceraldehyde 3-phosphate (G3P) and ammonia. The ammonia is provided by the PdxT subunit. Can also use ribulose 5-phosphate and dihydroxyacetone phosphate as substrates, resulting from enzyme-catalyzed isomerization of RBP and G3P, respectively. The sequence is that of Pyridoxal 5'-phosphate synthase subunit PdxS from Staphylococcus aureus (strain Mu3 / ATCC 700698).